A 360-amino-acid polypeptide reads, in one-letter code: MTTVLQRREQLNLWEQFCSWVTSTNNRLYVGWFGVLMIPTLLAATICFVIAFIAAPPVDIDGIREPVSGSLLYGNNIITGAVVPSSNAIGLHFYPIWEAASLDEWLYNGGPYQLIIFHFLIGVFCYMGREWELSYRLGMRPWICVAYSAPVAAATAVFLIYPIGQGSFSDGMPLGISGTFNFMLVFQAEHNILMHPFHQLGVAGVFGGALFSAMHGSLVTSSLIRETTETESANYGYKFGQEEETYNIVAAHGYFGRLIFQYASFNNSRALHFFLAAWPVIGIWFTALGISTMAFNLNGFNFNHSVVDAQGNVINTWADIINRANLGMEVMHERNAHNFPLDLASAESAPVAMIAPSING.

3 helical membrane passes run 29 to 46 (YVGW…AATI), 118 to 133 (HFLI…EWEL), and 142 to 156 (WICV…AATA). Histidine 118 is a binding site for chlorophyll a. Position 126 (tyrosine 126) interacts with pheophytin a. [CaMn4O5] cluster contacts are provided by aspartate 170 and glutamate 189. Residues 197-218 (FHQLGVAGVFGGALFSAMHGSL) form a helical membrane-spanning segment. Histidine 198 is a chlorophyll a binding site. A quinone is bound by residues histidine 215 and 264–265 (SF). A Fe cation-binding site is contributed by histidine 215. Histidine 272 serves as a coordination point for Fe cation. Residues 274–288 (FLAAWPVIGIWFTAL) form a helical membrane-spanning segment. The [CaMn4O5] cluster site is built by histidine 332, glutamate 333, aspartate 342, and alanine 344. Residues 345–360 (SAESAPVAMIAPSING) constitute a propeptide that is removed on maturation.

The protein belongs to the reaction center PufL/M/PsbA/D family. In terms of assembly, PSII is composed of 1 copy each of membrane proteins PsbA, PsbB, PsbC, PsbD, PsbE, PsbF, PsbH, PsbI, PsbJ, PsbK, PsbL, PsbM, PsbT, PsbX, PsbY, PsbZ, Psb30/Ycf12, peripheral proteins PsbO, CyanoQ (PsbQ), PsbU, PsbV and a large number of cofactors. It forms dimeric complexes. Precursor protein interacts with Ycf48. The D1/D2 heterodimer binds P680, chlorophylls that are the primary electron donor of PSII, and subsequent electron acceptors. It shares a non-heme iron and each subunit binds pheophytin, quinone, additional chlorophylls, carotenoids and lipids. D1 provides most of the ligands for the Mn4-Ca-O5 cluster of the oxygen-evolving complex (OEC). There is also a Cl(-1) ion associated with D1 and D2, which is required for oxygen evolution. The PSII complex binds additional chlorophylls, carotenoids and specific lipids. serves as cofactor. C-terminally processed by CtpA; processing is essential to allow assembly of the oxygen-evolving complex and thus photosynthetic growth. In terms of processing, tyr-161 forms a radical intermediate that is referred to as redox-active TyrZ, YZ or Y-Z.

The protein localises to the cellular thylakoid membrane. It catalyses the reaction 2 a plastoquinone + 4 hnu + 2 H2O = 2 a plastoquinol + O2. Photosystem II (PSII) is a light-driven water:plastoquinone oxidoreductase that uses light energy to abstract electrons from H(2)O, generating O(2) and a proton gradient subsequently used for ATP formation. It consists of a core antenna complex that captures photons, and an electron transfer chain that converts photonic excitation into a charge separation. The D1/D2 (PsbA/PsbD) reaction center heterodimer binds P680, the primary electron donor of PSII as well as several subsequent electron acceptors. This is Photosystem II protein D1 3 from Thermosynechococcus vestitus (strain NIES-2133 / IAM M-273 / BP-1).